The chain runs to 58 residues: Ribosome biogenesis protein Nop10 (58 aa).

It belongs to the NOP10 family.

Its function is as follows. Involved in ribosome biogenesis; more specifically in 18S rRNA pseudouridylation and in cleavage of pre-rRNA. This Methanobrevibacter smithii (strain ATCC 35061 / DSM 861 / OCM 144 / PS) protein is Ribosome biogenesis protein Nop10.